A 54-amino-acid chain; its full sequence is Califin-C (54 aa).

Cys25 and Cys53 form a disulfide bridge. At Leu36 the chain carries Leucine amide.

It belongs to the molluscan ELH family. As to quaternary structure, this protein consists of a large 36-residue subunit, bound by a single disulfide-bond to a small 18-residue subunit.

The protein localises to the secreted. In terms of biological role, injected in sexually mature animals califin C excites LB and LC cells of the abdominal ganglion and cause egg-laying. The polypeptide is Califin-C (Aplysia californica (California sea hare)).